Reading from the N-terminus, the 33-residue chain is U1-pseudomyrmecitoxin-Pt1 subunit LS2 (33 aa).

The protein belongs to the myrmexin family. Heterodimer composed of subunit LS2 and subunit SS1, heterodimer composed of subunit LS2 and SS2, and heterodimer composed of subunit LS2 and SS3; disulfide-linked. Expressed by the venom gland.

The protein resides in the secreted. This heterodimer may have anti-inflammatory properties, since the myrmexin complex (composed of 6 SS-LS heterodimers) inhibits carrageenin-induced edema in a dose-dependent manner (after subcutaneous injection into rats). The sequence is that of U1-pseudomyrmecitoxin-Pt1 subunit LS2 from Pseudomyrmex triplarinus (Ant).